A 451-amino-acid chain; its full sequence is Phosphoglucosamine mutase (451 aa).

Catalysis depends on Ser102, which acts as the Phosphoserine intermediate. The Mg(2+) site is built by Ser102, Asp242, Asp244, and Asp246. Ser102 carries the phosphoserine modification.

This sequence belongs to the phosphohexose mutase family. It depends on Mg(2+) as a cofactor. Activated by phosphorylation.

It carries out the reaction alpha-D-glucosamine 1-phosphate = D-glucosamine 6-phosphate. Functionally, catalyzes the conversion of glucosamine-6-phosphate to glucosamine-1-phosphate. The chain is Phosphoglucosamine mutase from Staphylococcus aureus (strain USA300).